Reading from the N-terminus, the 494-residue chain is Alpha-amylase (494 aa).

The signal sequence occupies residues 1-26 (MQISKAALLASLAALVYAQPVTLFKR). The cysteines at positions 57 and 65 are disulfide-linked. A substrate-binding site is contributed by tryptophan 110. Residue asparagine 148 coordinates Ca(2+). Histidine 149 is a binding site for substrate. An intrachain disulfide couples cysteine 177 to cysteine 191. Residue aspartate 202 coordinates Ca(2+). Asparagine 224 is a glycosylation site (N-linked (GlcNAc...) asparagine). Arginine 231 contributes to the substrate binding site. Ca(2+) contacts are provided by aspartate 233, histidine 237, and glutamate 257. Aspartate 233 functions as the Nucleophile in the catalytic mechanism. 236–237 (KH) contributes to the substrate binding site. The active-site Proton donor is the glutamate 257. Residue glycine 261 participates in substrate binding. Residues cysteine 267 and cysteine 310 are joined by a disulfide bond. Substrate-binding residues include aspartate 324 and arginine 371. An intrachain disulfide couples cysteine 462 to cysteine 493.

This sequence belongs to the glycosyl hydrolase 13 family. Requires Ca(2+) as cofactor.

It localises to the secreted. It catalyses the reaction Endohydrolysis of (1-&gt;4)-alpha-D-glucosidic linkages in polysaccharides containing three or more (1-&gt;4)-alpha-linked D-glucose units.. The polypeptide is Alpha-amylase (ALP1) (Saccharomycopsis fibuligera (Yeast)).